A 338-amino-acid polypeptide reads, in one-letter code: Limbic system-associated membrane protein (338 aa).

The signal sequence occupies residues Met1–Pro28. Ig-like C2-type domains are found at residues Val29–Ser122, Pro132–Thr214, and Pro219–Tyr306. Asn40, Asn66, Asn136, and Asn148 each carry an N-linked (GlcNAc...) asparagine glycan. Cys53 and Cys111 are joined by a disulfide. 2 disulfides stabilise this stretch: Cys153-Cys197 and Cys239-Cys290. 4 N-linked (GlcNAc...) asparagine glycosylation sites follow: Asn279, Asn287, Asn300, and Asn315. Residue Asn315 is the site of GPI-anchor amidated asparagine attachment. A propeptide spans Gly316–Cys338 (removed in mature form).

It belongs to the immunoglobulin superfamily. IgLON family.

The protein resides in the cell membrane. Its function is as follows. Mediates selective neuronal growth and axon targeting. Probably serves as a recognition molecule for the formation of limbic connections. This Gallus gallus (Chicken) protein is Limbic system-associated membrane protein.